The sequence spans 324 residues: Phospho-N-acetylmuramoyl-pentapeptide-transferase (324 aa).

The next 10 helical transmembrane spans lie at Thr9 to Val29, Thr53 to Ile73, Val77 to Leu97, Phe117 to Ala137, Ile149 to Ala169, Leu176 to Phe196, Met201 to Asn221, Ile227 to Leu247, Leu253 to Phe273, and Val304 to Phe324.

Belongs to the glycosyltransferase 4 family. MraY subfamily. Requires Mg(2+) as cofactor.

Its subcellular location is the cell membrane. The enzyme catalyses UDP-N-acetyl-alpha-D-muramoyl-L-alanyl-gamma-D-glutamyl-meso-2,6-diaminopimeloyl-D-alanyl-D-alanine + di-trans,octa-cis-undecaprenyl phosphate = di-trans,octa-cis-undecaprenyl diphospho-N-acetyl-alpha-D-muramoyl-L-alanyl-D-glutamyl-meso-2,6-diaminopimeloyl-D-alanyl-D-alanine + UMP. The protein operates within cell wall biogenesis; peptidoglycan biosynthesis. In terms of biological role, catalyzes the initial step of the lipid cycle reactions in the biosynthesis of the cell wall peptidoglycan: transfers peptidoglycan precursor phospho-MurNAc-pentapeptide from UDP-MurNAc-pentapeptide onto the lipid carrier undecaprenyl phosphate, yielding undecaprenyl-pyrophosphoryl-MurNAc-pentapeptide, known as lipid I. This chain is Phospho-N-acetylmuramoyl-pentapeptide-transferase, found in Listeria innocua serovar 6a (strain ATCC BAA-680 / CLIP 11262).